A 614-amino-acid chain; its full sequence is MERNLLSILMRRRLAERNRDAIELAAVQKMEVIGSTEGYTFDDGSDHDDVTKIFVGGGRQGIHYIEFEYVKNGQLESGVHLGVRYRGFTETFEINHLNNEHLESVEGYYDYGSGYIQGLQFKTNFRVSELIGYDEGTKFSLSVKGKRIIGFHGYMKERKIISLGGYFSWIHPRKMEAKGSKGGNQWDDGTNNDGVTKIHVRGGVEGIQYIKFDYVRKSGQHINGSIHGLSGSGFTQTFEIDHLNNEHLVCVEGYYDDESGVIQALQFKTNIKTSELLGYKKGKKFSLVDKRKKIVGFHGYADKNLNSLGAYFTTVSPTKSECYGSSKGIYWDDGVFDFIRTVYVSSNVMNVRYIKFHYYNRAVVVRQHGWNSIVEEDGEKEFELDYPNELITSVEGTMKSFSRSEIRISSLTFKTSKGRTSPTIGIASGTKFLLASKGCAVVGFYGRHDDRDLVAIGAYFSPLPPPTAEKLQAQGGNQGDSWDDGVFEGVRKLYVGQGKNCVAFLKVVYDSNTQVVIGEDHGNKTLFEVKEYELEYPSEYITAVDGCYNKVNGTEVEVITMLRIQTNKRTSIPVGCESNSSFVLKKEGYKIVGFHGKASNMINQLGVHVVPLTE.

4 consecutive Jacalin-type lectin domains span residues 27-169, 172-314, 317-462, and 468-611; these read VQKM…YFSW, PRKM…YFTT, PTKS…YFSP, and AEKL…HVVP.

Belongs to the jacalin lectin family.

This is Jacalin-related lectin 14 (JAL14) from Arabidopsis thaliana (Mouse-ear cress).